The following is a 333-amino-acid chain: Nucleoid-associated protein VC0395_A1624/VC395_2154 (333 aa).

Belongs to the YejK family.

Its subcellular location is the cytoplasm. It is found in the nucleoid. The sequence is that of Nucleoid-associated protein VC0395_A1624/VC395_2154 from Vibrio cholerae serotype O1 (strain ATCC 39541 / Classical Ogawa 395 / O395).